The chain runs to 803 residues: Nucleoporin nup82 (803 aa).

In terms of assembly, component of the nuclear pore complex (NPC). NPC constitutes the exclusive means of nucleocytoplasmic transport. NPCs allow the passive diffusion of ions and small molecules and the active, nuclear transport receptor-mediated bidirectional transport of macromolecules such as proteins, RNAs, ribonucleoparticles (RNPs), and ribosomal subunits across the nuclear envelope.

The protein resides in the nucleus. Its subcellular location is the nuclear pore complex. It localises to the nucleus membrane. Its function is as follows. Functions as a component of the nuclear pore complex (NPC). NPC components, collectively referred to as nucleoporins (NUPs), can play the role of both NPC structural components and of docking or interaction partners for transiently associated nuclear transport factors. The sequence is that of Nucleoporin nup82 from Schizosaccharomyces pombe (strain 972 / ATCC 24843) (Fission yeast).